We begin with the raw amino-acid sequence, 148 residues long: Ubiquitin-conjugating enzyme E2 13 (148 aa).

Positions 2–148 (ALPKRIIKEI…AREWTKKYAV (147 aa)) constitute a UBC core domain. The active-site Glycyl thioester intermediate is Cys-86.

The protein belongs to the ubiquitin-conjugating enzyme family. As to quaternary structure, heterodimer with spm2.

It carries out the reaction S-ubiquitinyl-[E1 ubiquitin-activating enzyme]-L-cysteine + [E2 ubiquitin-conjugating enzyme]-L-cysteine = [E1 ubiquitin-activating enzyme]-L-cysteine + S-ubiquitinyl-[E2 ubiquitin-conjugating enzyme]-L-cysteine.. Its pathway is protein modification; protein ubiquitination. Has a role in the DNA error-free postreplication repair (PRR) pathway. The ubc13/spm2 heterodimer catalyzes the synthesis of non-canonical poly-ubiquitin chains that are linked through 'Lys-63'. This is Ubiquitin-conjugating enzyme E2 13 (ubc13) from Schizosaccharomyces pombe (strain 972 / ATCC 24843) (Fission yeast).